The chain runs to 90 residues: Secretory calcium-binding phosphoprotein proline-glutamine-rich 1 (90 aa).

An N-terminal signal peptide occupies residues 1-15 (MQLFLLAALLSAAAA).

As to expression, expressed in enamel organ.

Its subcellular location is the secreted. Its function is as follows. Tooth-associated epithelia protein that may participate in structuring the basal lamina at cell-tooth interface. The protein is Secretory calcium-binding phosphoprotein proline-glutamine-rich 1 of Mus musculus (Mouse).